Consider the following 330-residue polypeptide: MTHAVTLRGPSPWGFRLVGGRDFSAPLTISRVHAGSKAALAALCPGDSIQAINGESTELMTHLEAQNRIKGCHDHLTLSVSRPENKNWPSSPNDKAQAHRIHIDPEAQDGSPATSRRSSISGISLEDNRSGLGSPYGQPPRLPVPHNGSSNEVTLPSQMSALHVSPPPSADTPRILPRNRDCRVDLGSEVYRMLREPAEPAASEPKQSGSFRYLQGMLEAGEGGDRPGSGGSRNLKPAASKLGAPLSGLQGLPECTRCGHGIVGTIVKARDKLYHPECFMCSDCGLNLKQRGYFFLDERLYCENHAKARVKPPEGYDVVAVYPNAKVELV.

The region spanning 1 to 84 is the PDZ domain; that stretch reads MTHAVTLRGP…HLTLSVSRPE (84 aa). Disordered stretches follow at residues 104-154 and 219-239; these read DPEA…NEVT and EAGE…KPAA. A phosphoserine mark is found at Ser-111, Ser-115, Ser-118, Ser-119, Ser-124, and Ser-134. Residues 111–122 are compositionally biased toward polar residues; the sequence is SPATSRRSSISG. The 51-residue stretch at 255–305 folds into the LIM zinc-binding domain; that stretch reads CTRCGHGIVGTIVKARDKLYHPECFMCSDCGLNLKQRGYFFLDERLYCENH.

Homodimer. Interacts (via C-terminus only or via combined C-terminus and LIM domain, but not LIM domain only) with PTPN13 (via the second or fourth PDZ domains). Found in a complex with PTPN13 and TRIP6. Interacts (via PDZ domain) with ACTN1 and ACTN2 (via C-terminal SDL residues). Interacts (via PDZ domain) with TRIP6 (via the second LIM domain or via the third LIM domain plus C-terminus). Interacts (via LIM domain) with GRIA1 (via C-terminus); this interaction as well as the interaction with alpha-actinin is required for their colocalization in early endosomes. Interacts with PDLIM1. Forms (via LIM domain) a heterodimer with PDLIM3. Interacts directly with SRC (via kinase domain and to a lesser extent the SH2 domain). Post-translationally, phosphorylated on tyrosine residue(s). Can be dephosphorylated by PTPN13. As to expression, detected in several tissues, most prominent in brain and heart of adults. Expressed in embryonic fibroblasts.

Its subcellular location is the cytoplasm. It is found in the cytoskeleton. It localises to the cell projection. The protein localises to the dendritic spine. The protein resides in the early endosome membrane. Its subcellular location is the recycling endosome membrane. It is found in the nucleus. It localises to the perinuclear region. The protein localises to the lamellipodium. The protein resides in the synapse. Its subcellular location is the synaptosome. Suppresses SRC activation by recognizing and binding to active SRC and facilitating PTPN13-mediated dephosphorylation of SRC 'Tyr-419' leading to its inactivation. Inactivated SRC dissociates from this protein allowing the initiation of a new SRC inactivation cycle. Involved in reorganization of the actin cytoskeleton. In nonmuscle cells, binds to ACTN1 (alpha-actinin-1), increases the affinity of ACTN1 to F-actin (filamentous actin), and promotes formation of actin stress fibers. Involved in regulation of the synaptic AMPA receptor transport in dendritic spines of hippocampal pyramidal neurons directing the receptors toward an insertion at the postsynaptic membrane. Links endosomal surface-internalized GRIA1-containing AMPA receptors to the alpha-actinin/actin cytoskeleton. Increases AMPA receptor-mediated excitatory postsynaptic currents in neurons. The protein is PDZ and LIM domain protein 4 (Pdlim4) of Rattus norvegicus (Rat).